The following is a 518-amino-acid chain: Nuclear receptor ROR-gamma (518 aa).

The tract at residues 1–30 (MDRAPQRQHRASRELLAAKKTHTSQIEVIP) is modulating. 2 consecutive NR C4-type zinc fingers follow at residues 31–51 (CKICGDKSSGIHYGVITCEGC) and 67–91 (CTRQQNCPIDRTSRNRCQHCRLQKC). Positions 31-96 (CKICGDKSSG…RLQKCLALGM (66 aa)) form a DNA-binding region, nuclear receptor. Disordered stretches follow at residues 105–183 (RMSK…SGSG) and 238–258 (HPGLGELGQGPDSYGSPSFRS). Positions 109-118 (KQRDSLHAEV) are enriched in basic and acidic residues. Positions 119–130 (QKQLQQRQQQQQ) are enriched in low complexity. The 240-residue stretch at 269-508 (EIEHLVQSVC…PPLYKELFST (240 aa)) folds into the NR LBD domain. Residues 501–506 (LYKELF) carry the AF-2 motif.

Belongs to the nuclear hormone receptor family. NR1 subfamily. As to quaternary structure, interacts (via AF-2 motif) with the coactivator NCOA2 (via LXXLL motif). Interacts with the corepressor NCOR1. Interacts with CRY1. Interacts (via AF-2 motif) with the coactivators NCOA1 and PPARGC1A (via LXXLL motif). Interacts (via AF-2 motif) with PROX1. Interacts with FOXP3. Interacts with NR0B2. In terms of tissue distribution, isoform 1 is widely expressed in many tissues, including liver and adipose, and highly expressed in skeletal muscle. Isoform 2 is primarily expressed in immature thymocytes.

The protein resides in the nucleus. Functionally, nuclear receptor that binds DNA as a monomer to ROR response elements (RORE) containing a single core motif half-site 5'-AGGTCA-3' preceded by a short A-T-rich sequence. Key regulator of cellular differentiation, immunity, peripheral circadian rhythm as well as lipid, steroid, xenobiotics and glucose metabolism. Considered to have intrinsic transcriptional activity, have some natural ligands like oxysterols that act as agonists (25-hydroxycholesterol) or inverse agonists (7-oxygenated sterols), enhancing or repressing the transcriptional activity, respectively. Recruits distinct combinations of cofactors to target gene regulatory regions to modulate their transcriptional expression, depending on the tissue, time and promoter contexts. Regulates the circadian expression of clock genes such as CRY1, BMAL1 and NR1D1 in peripheral tissues and in a tissue-selective manner. Competes with NR1D1 for binding to their shared DNA response element on some clock genes such as BMAL1, CRY1 and NR1D1 itself, resulting in NR1D1-mediated repression or RORC-mediated activation of the expression, leading to the circadian pattern of clock genes expression. Therefore influences the period length and stability of the clock. Involved in the regulation of the rhythmic expression of genes involved in glucose and lipid metabolism, including PLIN2 and AVPR1A. Negative regulator of adipocyte differentiation through the regulation of early phase genes expression, such as MMP3. Controls adipogenesis as well as adipocyte size and modulates insulin sensitivity in obesity. In liver, has specific and redundant functions with RORA as positive or negative modulator of expression of genes encoding phase I and Phase II proteins involved in the metabolism of lipids, steroids and xenobiotics, such as SULT1E1. Also plays a role in the regulation of hepatocyte glucose metabolism through the regulation of G6PC1 and PCK1. Regulates the rhythmic expression of PROX1 and promotes its nuclear localization. Plays an indispensable role in the induction of IFN-gamma dependent anti-mycobacterial systemic immunity. Its function is as follows. Essential for thymopoiesis and the development of several secondary lymphoid tissues, including lymph nodes and Peyer's patches. Required for the generation of LTi (lymphoid tissue inducer) cells. Regulates thymocyte survival through DNA-binding on ROREs of target gene promoter regions and recruitment of coactivaros via the AF-2. Also plays a key role, downstream of IL6 and TGFB and synergistically with RORA, for lineage specification of uncommitted CD4(+) T-helper (T(H)) cells into T(H)17 cells, antagonizing the T(H)1 program. Probably regulates IL17 and IL17F expression on T(H) by binding to the essential enhancer conserved non-coding sequence 2 (CNS2) in the IL17-IL17F locus. May also play a role in the pre-TCR activation cascade leading to the maturation of alpha/beta T-cells and may participate in the regulation of DNA accessibility in the TCR-J(alpha) locus. The polypeptide is Nuclear receptor ROR-gamma (RORC) (Homo sapiens (Human)).